The sequence spans 385 residues: MELQEVLRMNGGEGDTSYAKNSAYNHLVLNKVKPVLEQCIRELLRASLPNINKCIKVADLGCASGPNTLLTVRDIVQSIDKVGQEKKNELERPTIQIFLNDLFQNDFNSVFKLLPSFYRKLEKENGRKIGSCLIGAMPGSFYSRLFPEESMHFLHSCYCLHWLSQVPSGLVTELGISTNKGSIYSSKASRLPVQKAYLDQFTKDFTTFLRIHSEELFSHGRMLLTCICKGVEFDALNAIDLLEMAINDLVVEGHLEEEKLDSFNLPVYIPSAEEVKCIVEEEGSFEILYLETFKVLYDAGFSIDDNYPVRSHVQVYSDEHIKAEYVASSVRAVYEPILASHFGEAIIPDIFHRFAKHAAKVLPLGKAYYNNLIISLAKKPEKSDM.

Y18 contributes to the S-adenosyl-L-homocysteine binding site. The xanthosine site is built by N21 and N25. C62, N67, D101, L102, S140, F141, and C157 together coordinate S-adenosyl-L-homocysteine. Y158 is a xanthosine binding site. S-adenosyl-L-homocysteine is bound at residue C159. Xanthosine is bound by residues H161 and W162. The Mg(2+) site is built by N179, D261, F263, and N264. Positions 329, 334, and 369 each coordinate xanthosine.

The protein belongs to the methyltransferase superfamily. Type-7 methyltransferase family. The cofactor is Mg(2+). Expressed at low levels in young leaves but not in mature leaves. Barely detectable in fruits (grains).

It carries out the reaction xanthosine + S-adenosyl-L-methionine = 7-methylxanthosine + S-adenosyl-L-homocysteine. It functions in the pathway alkaloid biosynthesis. Involved in the biosynthesis of caffeine. Specific for xanthosine and could not use xanthosine 5'-monophosphate (XMP) as substrate. Catalyzes the 7-N-methylation activity of xanthosine, but does not have 1-N- or 3-N-methylation activity. The polypeptide is Xanthosine methyltransferase 2 (Coffea arabica (Arabian coffee)).